A 503-amino-acid polypeptide reads, in one-letter code: Arabinose import ATP-binding protein AraG (503 aa).

2 consecutive ABC transporter domains span residues 5–240 and 253–497; these read LRFD…MVGR and LGDV…LPQG. Position 37–44 (37–44) interacts with ATP; it reads GENGAGKS.

This sequence belongs to the ABC transporter superfamily. Arabinose importer (TC 3.A.1.2.2) family. As to quaternary structure, the complex is composed of two ATP-binding proteins (AraG), two transmembrane proteins (AraH) and a solute-binding protein (AraF).

Its subcellular location is the cell inner membrane. The catalysed reaction is L-arabinose(out) + ATP + H2O = L-arabinose(in) + ADP + phosphate + H(+). Part of the ABC transporter complex AraFGH involved in arabinose import. Responsible for energy coupling to the transport system. In Burkholderia pseudomallei (strain 1710b), this protein is Arabinose import ATP-binding protein AraG.